We begin with the raw amino-acid sequence, 326 residues long: DNA-directed RNA polymerase subunit alpha (326 aa).

Residues 1-231 are alpha N-terminal domain (alpha-NTD); it reads MQTALLKPKI…DQLSVFAALE (231 aa). The interval 247–326 is alpha C-terminal domain (alpha-CTD); that stretch reads IDPILLRPVD…ENWPPAGLEK (80 aa).

This sequence belongs to the RNA polymerase alpha chain family. As to quaternary structure, homodimer. The RNAP catalytic core consists of 2 alpha, 1 beta, 1 beta' and 1 omega subunit. When a sigma factor is associated with the core the holoenzyme is formed, which can initiate transcription.

The catalysed reaction is RNA(n) + a ribonucleoside 5'-triphosphate = RNA(n+1) + diphosphate. In terms of biological role, DNA-dependent RNA polymerase catalyzes the transcription of DNA into RNA using the four ribonucleoside triphosphates as substrates. This Ralstonia nicotianae (strain ATCC BAA-1114 / GMI1000) (Ralstonia solanacearum) protein is DNA-directed RNA polymerase subunit alpha.